A 321-amino-acid polypeptide reads, in one-letter code: Lipoyl synthase (321 aa).

[4Fe-4S] cluster-binding residues include Cys-68, Cys-73, Cys-79, Cys-94, Cys-98, Cys-101, and Ser-308. In terms of domain architecture, Radical SAM core spans 80-297 (FNHGTATFMI…KAEALAMGFT (218 aa)).

Belongs to the radical SAM superfamily. Lipoyl synthase family. [4Fe-4S] cluster is required as a cofactor.

Its subcellular location is the cytoplasm. It carries out the reaction [[Fe-S] cluster scaffold protein carrying a second [4Fe-4S](2+) cluster] + N(6)-octanoyl-L-lysyl-[protein] + 2 oxidized [2Fe-2S]-[ferredoxin] + 2 S-adenosyl-L-methionine + 4 H(+) = [[Fe-S] cluster scaffold protein] + N(6)-[(R)-dihydrolipoyl]-L-lysyl-[protein] + 4 Fe(3+) + 2 hydrogen sulfide + 2 5'-deoxyadenosine + 2 L-methionine + 2 reduced [2Fe-2S]-[ferredoxin]. The protein operates within protein modification; protein lipoylation via endogenous pathway; protein N(6)-(lipoyl)lysine from octanoyl-[acyl-carrier-protein]: step 2/2. In terms of biological role, catalyzes the radical-mediated insertion of two sulfur atoms into the C-6 and C-8 positions of the octanoyl moiety bound to the lipoyl domains of lipoate-dependent enzymes, thereby converting the octanoylated domains into lipoylated derivatives. This is Lipoyl synthase from Edwardsiella ictaluri (strain 93-146).